The primary structure comprises 209 residues: Guanylate kinase (209 aa).

One can recognise a Guanylate kinase-like domain in the interval G5–E184. G12–G19 is a binding site for ATP.

It belongs to the guanylate kinase family.

Its subcellular location is the cytoplasm. The catalysed reaction is GMP + ATP = GDP + ADP. In terms of biological role, essential for recycling GMP and indirectly, cGMP. This is Guanylate kinase from Streptococcus thermophilus (strain CNRZ 1066).